The sequence spans 221 residues: Uracil-DNA glycosylase 1 (221 aa).

The Proton acceptor role is filled by aspartate 61.

It belongs to the uracil-DNA glycosylase (UDG) superfamily. UNG family.

It is found in the cytoplasm. It carries out the reaction Hydrolyzes single-stranded DNA or mismatched double-stranded DNA and polynucleotides, releasing free uracil.. Its function is as follows. Excises uracil residues from the DNA which can arise as a result of misincorporation of dUMP residues by DNA polymerase or due to deamination of cytosine. The protein is Uracil-DNA glycosylase 1 of Listeria monocytogenes serovar 1/2a (strain ATCC BAA-679 / EGD-e).